The primary structure comprises 162 residues: NADH-quinone oxidoreductase subunit I (162 aa).

4Fe-4S ferredoxin-type domains lie at 54 to 83 and 93 to 122; these read RRYENGEERCIACKLCEVVCPALAITINST and SSYEIDLFKCIFCGYCEESCPVDSIVETNI. [4Fe-4S] cluster-binding residues include cysteine 63, cysteine 66, cysteine 69, cysteine 73, cysteine 102, cysteine 105, cysteine 108, and cysteine 112.

This sequence belongs to the complex I 23 kDa subunit family. As to quaternary structure, NDH-1 is composed of 14 different subunits. Subunits NuoA, H, J, K, L, M, N constitute the membrane sector of the complex. Requires [4Fe-4S] cluster as cofactor.

The protein resides in the cell inner membrane. It catalyses the reaction a quinone + NADH + 5 H(+)(in) = a quinol + NAD(+) + 4 H(+)(out). NDH-1 shuttles electrons from NADH, via FMN and iron-sulfur (Fe-S) centers, to quinones in the respiratory chain. The immediate electron acceptor for the enzyme in this species is believed to be ubiquinone. Couples the redox reaction to proton translocation (for every two electrons transferred, four hydrogen ions are translocated across the cytoplasmic membrane), and thus conserves the redox energy in a proton gradient. This is NADH-quinone oxidoreductase subunit I from Francisella philomiragia subsp. philomiragia (strain ATCC 25017 / CCUG 19701 / FSC 153 / O#319-036).